The sequence spans 460 residues: ATP synthase subunit beta (460 aa).

ATP is bound at residue 150–157 (GGAGVGKT).

The protein belongs to the ATPase alpha/beta chains family. F-type ATPases have 2 components, CF(1) - the catalytic core - and CF(0) - the membrane proton channel. CF(1) has five subunits: alpha(3), beta(3), gamma(1), delta(1), epsilon(1). CF(0) has three main subunits: a(1), b(2) and c(9-12). The alpha and beta chains form an alternating ring which encloses part of the gamma chain. CF(1) is attached to CF(0) by a central stalk formed by the gamma and epsilon chains, while a peripheral stalk is formed by the delta and b chains.

It localises to the cell inner membrane. The enzyme catalyses ATP + H2O + 4 H(+)(in) = ADP + phosphate + 5 H(+)(out). Produces ATP from ADP in the presence of a proton gradient across the membrane. The catalytic sites are hosted primarily by the beta subunits. This chain is ATP synthase subunit beta, found in Klebsiella pneumoniae subsp. pneumoniae (strain ATCC 700721 / MGH 78578).